The sequence spans 96 residues: Small ribosomal subunit protein bS6 (96 aa).

Belongs to the bacterial ribosomal protein bS6 family.

Its function is as follows. Binds together with bS18 to 16S ribosomal RNA. In Gloeobacter violaceus (strain ATCC 29082 / PCC 7421), this protein is Small ribosomal subunit protein bS6.